A 429-amino-acid polypeptide reads, in one-letter code: Histidine--tRNA ligase (429 aa).

It belongs to the class-II aminoacyl-tRNA synthetase family. As to quaternary structure, homodimer.

The protein localises to the cytoplasm. The catalysed reaction is tRNA(His) + L-histidine + ATP = L-histidyl-tRNA(His) + AMP + diphosphate + H(+). This is Histidine--tRNA ligase from Streptococcus pneumoniae (strain Taiwan19F-14).